Reading from the N-terminus, the 378-residue chain is MSGLEAIWWRERPGPLGALAGAPLLLAEAPFRAAAALRGALYDRGVLPAVRAGAPVVSIGNLAVGGAGKTPAALAVAARLAGRGRRVAILSRGYGAARADARVASDGAGALLPAAEAGDEPALLARRLPGVAVLCGPRRAELARTAVEALGADALVLDDGFQHRALARDLDVVVLDASNPFGNGHLLPRGPNREPRTALRRAGLVWLSHADRAAPERLEALRRLARDATGRAPVESRHAPTALLDGALREAGSLEALRGRRVAALSGLARPAGFLRTLEALGAEVALARAFPDHHRFTGGELEAVLRDADAAGCAWVVTTEKDAVRLDAALAAAAADRLRVVRVDAELLRGADVLEAALDAALAAAPQPRPAPRAPVS.

63–70 (AVGGAGKT) serves as a coordination point for ATP.

Belongs to the LpxK family.

It catalyses the reaction a lipid A disaccharide + ATP = a lipid IVA + ADP + H(+). The protein operates within glycolipid biosynthesis; lipid IV(A) biosynthesis; lipid IV(A) from (3R)-3-hydroxytetradecanoyl-[acyl-carrier-protein] and UDP-N-acetyl-alpha-D-glucosamine: step 6/6. Its function is as follows. Transfers the gamma-phosphate of ATP to the 4'-position of a tetraacyldisaccharide 1-phosphate intermediate (termed DS-1-P) to form tetraacyldisaccharide 1,4'-bis-phosphate (lipid IVA). The polypeptide is Tetraacyldisaccharide 4'-kinase (Anaeromyxobacter sp. (strain K)).